Reading from the N-terminus, the 370-residue chain is 3-dehydroquinate synthase (370 aa).

Residues 108 to 112, 132 to 133, Lys145, and Lys154 each bind NAD(+); these read GVIGD and TT. 3 residues coordinate Zn(2+): Glu187, His249, and His267.

The protein belongs to the sugar phosphate cyclases superfamily. Dehydroquinate synthase family. The cofactor is Co(2+). Zn(2+) serves as cofactor. Requires NAD(+) as cofactor.

It localises to the cytoplasm. It carries out the reaction 7-phospho-2-dehydro-3-deoxy-D-arabino-heptonate = 3-dehydroquinate + phosphate. It functions in the pathway metabolic intermediate biosynthesis; chorismate biosynthesis; chorismate from D-erythrose 4-phosphate and phosphoenolpyruvate: step 2/7. Functionally, catalyzes the conversion of 3-deoxy-D-arabino-heptulosonate 7-phosphate (DAHP) to dehydroquinate (DHQ). This chain is 3-dehydroquinate synthase, found in Cereibacter sphaeroides (strain ATCC 17025 / ATH 2.4.3) (Rhodobacter sphaeroides).